The sequence spans 493 residues: UPF0699 transmembrane protein YdbT (493 aa).

6 helical membrane passes run 18–38 (CHTI…VYIV), 46–66 (FYGA…SIIK), 188–208 (LMAA…FALI), 232–252 (IGIY…FSIA), 370–390 (VIFS…WGYL), and 393–413 (ILLP…AWTI).

This sequence belongs to the UPF0699 family.

The protein localises to the cell membrane. The sequence is that of UPF0699 transmembrane protein YdbT (ydbT) from Bacillus subtilis (strain 168).